Reading from the N-terminus, the 554-residue chain is Dihydroxy-acid dehydratase (554 aa).

Asp-78 contributes to the Mg(2+) binding site. Position 119 (Cys-119) interacts with [2Fe-2S] cluster. 2 residues coordinate Mg(2+): Asp-120 and Lys-121. At Lys-121 the chain carries N6-carboxylysine. Cys-191 is a binding site for [2Fe-2S] cluster. A Mg(2+)-binding site is contributed by Glu-442. Ser-468 functions as the Proton acceptor in the catalytic mechanism.

Belongs to the IlvD/Edd family. As to quaternary structure, homodimer. It depends on [2Fe-2S] cluster as a cofactor. Requires Mg(2+) as cofactor.

It catalyses the reaction (2R)-2,3-dihydroxy-3-methylbutanoate = 3-methyl-2-oxobutanoate + H2O. The enzyme catalyses (2R,3R)-2,3-dihydroxy-3-methylpentanoate = (S)-3-methyl-2-oxopentanoate + H2O. The protein operates within amino-acid biosynthesis; L-isoleucine biosynthesis; L-isoleucine from 2-oxobutanoate: step 3/4. It functions in the pathway amino-acid biosynthesis; L-valine biosynthesis; L-valine from pyruvate: step 3/4. Functions in the biosynthesis of branched-chain amino acids. Catalyzes the dehydration of (2R,3R)-2,3-dihydroxy-3-methylpentanoate (2,3-dihydroxy-3-methylvalerate) into 2-oxo-3-methylpentanoate (2-oxo-3-methylvalerate) and of (2R)-2,3-dihydroxy-3-methylbutanoate (2,3-dihydroxyisovalerate) into 2-oxo-3-methylbutanoate (2-oxoisovalerate), the penultimate precursor to L-isoleucine and L-valine, respectively. The sequence is that of Dihydroxy-acid dehydratase from Acetivibrio thermocellus (strain ATCC 27405 / DSM 1237 / JCM 9322 / NBRC 103400 / NCIMB 10682 / NRRL B-4536 / VPI 7372) (Clostridium thermocellum).